A 274-amino-acid polypeptide reads, in one-letter code: tRNA uridine(34) hydroxylase (274 aa).

The Rhodanese domain maps to Ser-121 to Asn-217. Catalysis depends on Cys-177, which acts as the Cysteine persulfide intermediate.

The protein belongs to the TrhO family.

The catalysed reaction is uridine(34) in tRNA + AH2 + O2 = 5-hydroxyuridine(34) in tRNA + A + H2O. Functionally, catalyzes oxygen-dependent 5-hydroxyuridine (ho5U) modification at position 34 in tRNAs. The polypeptide is tRNA uridine(34) hydroxylase (Ehrlichia canis (strain Jake)).